A 430-amino-acid chain; its full sequence is 3-phosphoshikimate 1-carboxyvinyltransferase (430 aa).

3-phosphoshikimate contacts are provided by Lys-20, Ser-21, and Arg-25. Residue Lys-20 coordinates phosphoenolpyruvate. Phosphoenolpyruvate is bound by residues Gly-92 and Arg-120. Residues Ser-166, Gln-168, Asp-312, and Lys-339 each coordinate 3-phosphoshikimate. Gln-168 serves as a coordination point for phosphoenolpyruvate. Residue Asp-312 is the Proton acceptor of the active site. Arg-343 and Arg-387 together coordinate phosphoenolpyruvate.

Belongs to the EPSP synthase family. As to quaternary structure, monomer.

The protein localises to the cytoplasm. The enzyme catalyses 3-phosphoshikimate + phosphoenolpyruvate = 5-O-(1-carboxyvinyl)-3-phosphoshikimate + phosphate. It participates in metabolic intermediate biosynthesis; chorismate biosynthesis; chorismate from D-erythrose 4-phosphate and phosphoenolpyruvate: step 6/7. Functionally, catalyzes the transfer of the enolpyruvyl moiety of phosphoenolpyruvate (PEP) to the 5-hydroxyl of shikimate-3-phosphate (S3P) to produce enolpyruvyl shikimate-3-phosphate and inorganic phosphate. This is 3-phosphoshikimate 1-carboxyvinyltransferase from Lactococcus lactis subsp. cremoris (strain SK11).